The following is an 805-amino-acid chain: MGEIGGEELVLDVDETIFVAVAEDVERSKTTVLWAARNFSGKKICLLYVHRTARAASWTHKKLVGGSFKKHDVKVIERVEKPKVDELMNSYLQLLSETEIQTDKLCIAGQNIEECIVELIARHKIKWLVMGAASDKHYSWKMTDLKSKKAIFVCKKAPDSCHIWFLCKGYLIFTRASNDDSNNRQTMPPLVQLDSDNETRKSEKLESSYMRRRLRYWRSLLEQDGEKDTGQLEREKVEPRAPPLFSSGSSSSFGEPVGPEPVSPELVDSDTLNTSNVEEKEREGDVARKVHRYDKAMHDIGQSDRTVYGEAGKKWEEDASTTEALCKAKALEGLCIKESSQRKRLEELLEKEKLEVKMVIEQNNGFMKELQMVQGRNLKLESQMRKLQDLEKEHGEKFDTAMELLKSFRQKRDEIRIDHENAVKEVNALRRLVKGETGESSGSEMLDYSFMEINEATNEFDPSWKLGEGKYGSVYKGNLQHLQVAVKMLPSYGSLNHFEFERRVEILSRVRHPNLVTLMGACPESRSLIYQYIPNGSLEDCFSSENNVPALSWESRIRIASEICSALLFLHSNIPCIIHGNLKPSKILLDSNLVTKINDYGISQLIPIDGLDKSDPHVDPHYFVSREMTLESDIYAFGIILLQLLTRRPVSGILRDVKCALENDNISAVLDNSAGDWPVARGKKLANVAIRCCKKNPMNRPDLAVVLRFIDRMKAPEVPSSETSSYANQNVPRRPPSHYLCPIFQEVMKDPLIAADGFTYEAEAIREWLANGHDTSPMTNLKMEDCNLIPNHALHLAIQDWQNQW.

2 disordered regions span residues 181–205 and 226–284; these read SNNRQTMPPLVQLDSDNETRKSEKL and EKDT…EREG. The span at 226-239 shows a compositional bias: basic and acidic residues; the sequence is EKDTGQLEREKVEP. Over residues 245-257 the composition is skewed to low complexity; the sequence is FSSGSSSSFGEPV. Residues 331–434 are a coiled coil; the sequence is LEGLCIKESS…EVNALRRLVK (104 aa). A Protein kinase domain is found at 460–718; that stretch reads FDPSWKLGEG…FIDRMKAPEV (259 aa). ATP contacts are provided by residues 466–474 and Lys-487; that span reads LGEGKYGSV. The U-box domain maps to 734-805; the sequence is RPPSHYLCPI…LAIQDWQNQW (72 aa).

Belongs to the protein kinase superfamily. Ser/Thr protein kinase family.

The enzyme catalyses S-ubiquitinyl-[E2 ubiquitin-conjugating enzyme]-L-cysteine + [acceptor protein]-L-lysine = [E2 ubiquitin-conjugating enzyme]-L-cysteine + N(6)-ubiquitinyl-[acceptor protein]-L-lysine.. It participates in protein modification; protein ubiquitination. Functionally, functions as an E3 ubiquitin ligase. This is U-box domain-containing protein 32 (PUB32) from Arabidopsis thaliana (Mouse-ear cress).